We begin with the raw amino-acid sequence, 357 residues long: Glucose-6-phosphatase catalytic subunit 1 (357 aa).

Residues 1–28 are Lumenal-facing; that stretch reads MEKGMNVLHDFGIQSTHYLQVNYQNSQD. The helical transmembrane segment at 29–49 threads the bilayer; sequence WFILVSVIADLRNAFYVLFPI. Over 50–60 the chain is Cytoplasmic; that stretch reads WFHLREAVGIK. A helical transmembrane segment spans residues 61-81; the sequence is LLWVAVIGDWLNLVFKWILFG. Over 82–117 the chain is Lumenal; that stretch reads QRPYWWVLDTDYYSNTSAPLIKQFPVTCETGPGSPS. A substrate-binding site is contributed by R83. An N-linked (GlcNAc...) asparagine glycan is attached at N96. The helical transmembrane segment at 118–138 threads the bilayer; sequence GHAMGTAGVYYVMVTSTLSIF. H119 functions as the Proton donor in the catalytic mechanism. The Cytoplasmic segment spans residues 139–147; the sequence is RGKKKPTYR. The helical transmembrane segment at 148-168 threads the bilayer; sequence FRCLNVMLWLGFWVVQLNVCL. The Lumenal segment spans residues 169–170; the sequence is SR. R170 is a binding site for substrate. Residues 171 to 191 form a helical membrane-spanning segment; sequence IYLAAHFPHQVVAGVLSGIAV. H176 (nucleophile) is an active-site residue. The Cytoplasmic portion of the chain corresponds to 192 to 209; the sequence is AETFRHIQSIYNASLKKY. A helical membrane pass occupies residues 210–230; that stretch reads FLITCFLFSFAIGFYLLLKWL. The Lumenal portion of the chain corresponds to 231–254; it reads GVDLLWTLEKAKRRCERPEWVHID. Residues 255 to 275 traverse the membrane as a helical segment; the sequence is TTPFASLLKNLGTLFGLGLAL. Residues 276 to 291 are Cytoplasmic-facing; that stretch reads NSSMYRESCKGKLSKW. A helical membrane pass occupies residues 292 to 312; it reads FPFRLSCIVASLVLLHLFDSL. Topologically, residues 313–320 are lumenal; that stretch reads KPPSQIEL. The helical transmembrane segment at 321–341 threads the bilayer; that stretch reads IFYVLSFCKSAAVPLASVSLI. Over 342 to 357 the chain is Cytoplasmic; the sequence is PYCLAWVLGQPNKKTV. The Prevents secretion from ER motif lies at 354–357; sequence KKTV.

Belongs to the glucose-6-phosphatase family.

Its subcellular location is the endoplasmic reticulum membrane. It catalyses the reaction D-glucose 6-phosphate + H2O = D-glucose + phosphate. The protein operates within carbohydrate biosynthesis; gluconeogenesis. Its function is as follows. Hydrolyzes glucose-6-phosphate to glucose in the endoplasmic reticulum. Forms with the glucose-6-phosphate transporter (SLC37A4/G6PT) the complex responsible for glucose production in the terminal step of glycogenolysis and gluconeogenesis. Hence, it is the key enzyme in homeostatic regulation of blood glucose levels. The sequence is that of Glucose-6-phosphatase catalytic subunit 1 (G6PC1) from Bos taurus (Bovine).